We begin with the raw amino-acid sequence, 128 residues long: uncharacterized protein (128 aa).

3 consecutive transmembrane segments (helical) span residues 19–41 (MAIVTNTPIWVWCVLLCLLYVGS), 54–71 (LTFLPLIFLPIVIMSIMQ), and 75–97 (PLIAGFGFIVGLALGLFFRVDNL).

It is found in the cell membrane. This is an uncharacterized protein from Pasteurella multocida (strain Pm70).